An 86-amino-acid polypeptide reads, in one-letter code: MQDELFETEKAPQKNTKNAKNAPKKSFEEHVHSLEQAIDRLNDPNLSLKDGMDLYKTAMQELVLAQKLLENAYLEYEKLQTLDKKA.

The interval 1-26 (MQDELFETEKAPQKNTKNAKNAPKKS) is disordered.

Belongs to the XseB family. As to quaternary structure, heterooligomer composed of large and small subunits.

Its subcellular location is the cytoplasm. The catalysed reaction is Exonucleolytic cleavage in either 5'- to 3'- or 3'- to 5'-direction to yield nucleoside 5'-phosphates.. Its function is as follows. Bidirectionally degrades single-stranded DNA into large acid-insoluble oligonucleotides, which are then degraded further into small acid-soluble oligonucleotides. The chain is Exodeoxyribonuclease 7 small subunit from Helicobacter pylori (strain HPAG1).